A 126-amino-acid chain; its full sequence is UPF0102 protein plu4003 (126 aa).

This sequence belongs to the UPF0102 family.

The protein is UPF0102 protein plu4003 of Photorhabdus laumondii subsp. laumondii (strain DSM 15139 / CIP 105565 / TT01) (Photorhabdus luminescens subsp. laumondii).